The chain runs to 186 residues: Dynactin subunit 3 (186 aa).

The residue at position 2 (Ala2) is an N-acetylalanine.

It belongs to the dynactin subunit 3 family. In terms of assembly, subunit of dynactin, a multiprotein complex part of a tripartite complex with dynein and a adapter, such as BICDL1, BICD2 or HOOK3. The dynactin complex is built around ACTR1A/ACTB filament and consists of an actin-related filament composed of a shoulder domain, a pointed end and a barbed end. Its length is defined by its flexible shoulder domain. The soulder is composed of 2 DCTN1 subunits, 4 DCTN2 and 2 DCTN3. The 4 DCNT2 (via N-terminus) bind the ACTR1A filament and act as molecular rulers to determine the length. The pointed end is important for binding dynein-dynactin cargo adapters. Consists of 4 subunits: ACTR10, DCNT4, DCTN5 and DCTN6. The barbed end is composed of a CAPZA1:CAPZB heterodimers, which binds ACTR1A/ACTB filament and dynactin and stabilizes dynactin.

The protein resides in the cytoplasm. The protein localises to the cytoskeleton. It localises to the microtubule organizing center. Its subcellular location is the centrosome. It is found in the chromosome. The protein resides in the centromere. The protein localises to the kinetochore. It localises to the spindle. Its subcellular location is the cleavage furrow. It is found in the midbody. Functionally, part of the dynactin complex that activates the molecular motor dynein for ultra-processive transport along microtubules. Together with dynein is involved in spindle assembly and cytokinesis. The protein is Dynactin subunit 3 of Sus scrofa (Pig).